The sequence spans 78 residues: Acyl carrier protein (78 aa).

Residues 2–77 (STIEERVKKI…AAIDYVKAHQ (76 aa)) enclose the Carrier domain. Position 37 is an O-(pantetheine 4'-phosphoryl)serine (Ser-37).

It belongs to the acyl carrier protein (ACP) family. In terms of processing, 4'-phosphopantetheine is transferred from CoA to a specific serine of apo-ACP by AcpS. This modification is essential for activity because fatty acids are bound in thioester linkage to the sulfhydryl of the prosthetic group.

The protein resides in the cytoplasm. It functions in the pathway lipid metabolism; fatty acid biosynthesis. Functionally, carrier of the growing fatty acid chain in fatty acid biosynthesis. This is Acyl carrier protein from Pseudomonas putida (strain ATCC 700007 / DSM 6899 / JCM 31910 / BCRC 17059 / LMG 24140 / F1).